We begin with the raw amino-acid sequence, 120 residues long: Large ribosomal subunit protein bL12 (120 aa).

The protein belongs to the bacterial ribosomal protein bL12 family. As to quaternary structure, homodimer. Part of the ribosomal stalk of the 50S ribosomal subunit. Forms a multimeric L10(L12)X complex, where L10 forms an elongated spine to which 2 to 4 L12 dimers bind in a sequential fashion. Binds GTP-bound translation factors.

Functionally, forms part of the ribosomal stalk which helps the ribosome interact with GTP-bound translation factors. Is thus essential for accurate translation. The sequence is that of Large ribosomal subunit protein bL12 from Shouchella clausii (strain KSM-K16) (Alkalihalobacillus clausii).